The primary structure comprises 226 residues: MGQKVNPNGFRYGVTKAHNTTWFAHKATYGSKLVEDVKIYKFFDKFTRKFQIGKVEIQRDLNNKVSVFLHTSKPAAILGENGTNIKNLTVALQKHLKNKKLDVNLKVLTIKEPDLNARLLAEMIATKLENRESFRSAQKIAIRSALKAGAKGIKTAVSGRLNGVDMARTEGYSEGEMKLHTLRQDVSYATATARTTYGAIGVKVWVSLGEILQGDRTFHHASTKKN.

In terms of domain architecture, KH type-2 spans 39-109; it reads IYKFFDKFTR…KLDVNLKVLT (71 aa).

Belongs to the universal ribosomal protein uS3 family. Part of the 30S ribosomal subunit. Forms a tight complex with proteins S10 and S14.

In terms of biological role, binds the lower part of the 30S subunit head. Binds mRNA in the 70S ribosome, positioning it for translation. The chain is Small ribosomal subunit protein uS3 from Mycoplasmopsis synoviae (strain 53) (Mycoplasma synoviae).